A 43-amino-acid chain; its full sequence is Large ribosomal subunit protein uL5 (43 aa).

Belongs to the universal ribosomal protein uL5 family. As to quaternary structure, part of the 50S ribosomal subunit; part of the 5S rRNA/L5/L18/L25 subcomplex. Contacts the 5S rRNA and the P site tRNA. Forms a bridge to the 30S subunit in the 70S ribosome.

This is one of the proteins that bind and probably mediate the attachment of the 5S RNA into the large ribosomal subunit, where it forms part of the central protuberance. In the 70S ribosome it contacts protein S13 of the 30S subunit (bridge B1b), connecting the 2 subunits; this bridge is implicated in subunit movement. Contacts the P site tRNA; the 5S rRNA and some of its associated proteins might help stabilize positioning of ribosome-bound tRNAs. The polypeptide is Large ribosomal subunit protein uL5 (rplE) (Proteus vulgaris).